Reading from the N-terminus, the 142-residue chain is Large ribosomal subunit protein uL11 (142 aa).

It belongs to the universal ribosomal protein uL11 family. As to quaternary structure, part of the ribosomal stalk of the 50S ribosomal subunit. Interacts with L10 and the large rRNA to form the base of the stalk. L10 forms an elongated spine to which L12 dimers bind in a sequential fashion forming a multimeric L10(L12)X complex. In terms of processing, one or more lysine residues are methylated.

In terms of biological role, forms part of the ribosomal stalk which helps the ribosome interact with GTP-bound translation factors. The protein is Large ribosomal subunit protein uL11 of Citrobacter koseri (strain ATCC BAA-895 / CDC 4225-83 / SGSC4696).